A 486-amino-acid chain; its full sequence is Histamine H1 receptor (486 aa).

At 1–29 (MSFANTSSTFEDKMCEGNRTAMASPQLLP) the chain is on the extracellular side. N-linked (GlcNAc...) asparagine glycosylation is found at asparagine 5 and asparagine 18. The chain crosses the membrane as a helical span at residues 30–50 (LVVVLSSISLVTVGLNLLVLY). Residues 51–64 (AVHSERKLHTVGNL) are Cytoplasmic-facing. The helical transmembrane segment at 65–89 (YIVSLSVADLIVGAVVMPMNILYLI) threads the bilayer. Residues 90–97 (MTKWSLGR) lie on the Extracellular side of the membrane. A helical transmembrane segment spans residues 98–123 (PLCLFWLSMDYVASTASIFSVFILCI). Cysteine 100 and cysteine 180 are joined by a disulfide. Residues aspartate 107 and threonine 112 each coordinate histamine. Residues 107 to 112 (DYVAST) are important for agonist binding. Over 124–144 (DRYRSVQQPLRYLRYRTKTRA) the chain is Cytoplasmic. Threonine 140 and threonine 142 each carry phosphothreonine. A helical membrane pass occupies residues 145–164 (SATILGAWFFSFLWVIPILG). Topologically, residues 165–188 (WHHFMPPAPELREDKCETDFYNVT) are extracellular. Residues 189-211 (WFKIMTAIINFYLPTLLMLWFYV) form a helical membrane-spanning segment. Residue asparagine 198 participates in histamine binding. Residues 212 to 415 (KIYKAVRRHC…LNRERKAAKQ (204 aa)) lie on the Cytoplasmic side of the membrane. Serine 230 carries the post-translational modification Phosphoserine. Over residues 241 to 253 (SDDTKEGAKKPGR) the composition is skewed to basic and acidic residues. Disordered regions lie at residues 241–295 (SDDT…GERE) and 310–379 (VAEG…RSGS). 2 positions are modified to phosphoserine: serine 342 and serine 345. The span at 347-365 (DQTLVDQQSFSRTTDSDTS) shows a compositional bias: polar residues. Phosphoserine is present on residues serine 379, serine 381, serine 395, and serine 397. Residues 416 to 439 (LGFIMAAFILCWIPYFIFFMVIAF) traverse the membrane as a helical segment. Positions 423 to 427 (FILCW) are important for agonist binding. Residue tyrosine 430 coordinates histamine. Cysteine 440 and cysteine 443 are oxidised to a cystine. Residues 440–445 (CKSCCS) lie on the Extracellular side of the membrane. The chain crosses the membrane as a helical span at residues 446–468 (EPMHMFTIWLGYINSTLNPLIYP). The Cytoplasmic portion of the chain corresponds to 469-486 (LCNENFKKTFKKILHIRS).

The protein belongs to the G-protein coupled receptor 1 family. In terms of processing, phosphorylation at sites in the second and third cytoplasmic loops independently contribute to agonist-induced receptor down-regulation.

It is found in the cell membrane. G-protein-coupled receptor for histamine, a biogenic amine that functions as an immune modulator and a neurotransmitter. Through the H1 receptor, histamine mediates the contraction of smooth muscles and increases capillary permeability due to contraction of terminal venules. Also mediates neurotransmission in the central nervous system and thereby regulates circadian rhythms, emotional and locomotor activities as well as cognitive functions. In Rattus norvegicus (Rat), this protein is Histamine H1 receptor.